The following is a 203-amino-acid chain: N-(5'-phosphoribosyl)anthranilate isomerase (203 aa).

This sequence belongs to the TrpF family.

The enzyme catalyses N-(5-phospho-beta-D-ribosyl)anthranilate = 1-(2-carboxyphenylamino)-1-deoxy-D-ribulose 5-phosphate. The protein operates within amino-acid biosynthesis; L-tryptophan biosynthesis; L-tryptophan from chorismate: step 3/5. The sequence is that of N-(5'-phosphoribosyl)anthranilate isomerase from Thermoanaerobacter sp. (strain X514).